A 189-amino-acid chain; its full sequence is Tumor protein p53-inducible protein 11 (189 aa).

The Cytoplasmic segment spans residues Met1–Arg63. Ser14 carries the post-translational modification Phosphoserine. The helical transmembrane segment at Val64–Pro84 threads the bilayer. Over Asp85–Gly108 the chain is Extracellular. The helical transmembrane segment at Ala109–Ile129 threads the bilayer. A topological domain (cytoplasmic) is located at residue Arg130. A helical transmembrane segment spans residues Trp131–Leu151. The Extracellular portion of the chain corresponds to Ala152 to Gly155. The chain crosses the membrane as a helical span at residues Leu156 to Ile176. Topologically, residues Tyr177–Val189 are cytoplasmic.

The protein resides in the membrane. The chain is Tumor protein p53-inducible protein 11 (Trp53i11) from Mus musculus (Mouse).